The following is a 441-amino-acid chain: UDP-N-acetylglucosamine--peptide N-acetylglucosaminyltransferase stabilizing protein GtfB (441 aa).

It belongs to the GtfB family. As to quaternary structure, forms a heterotetramer with 2 subunits each of GtfA and GtfB. Part of the accessory SecA2/SecY2 protein translocation apparatus.

The protein localises to the cell membrane. The protein operates within protein modification; protein glycosylation. Its function is as follows. Required for polymorphic O-glycosylation of the serine-rich repeat protein (SRRP) in this bacteria. A stabilizing protein that is part of the accessory SecA2/SecY2 system specifically required to export serine-rich repeat cell wall proteins encoded in the same operon. The GtfA-GtfB complex adds GlcNAc from UDP-GlcNAc to the substrate protein, attaching the first sugar residue. Stabilizes the glycosylation activity of GtfA. Has no N-acetylglucosaminyl transferase activity on its own. This is UDP-N-acetylglucosamine--peptide N-acetylglucosaminyltransferase stabilizing protein GtfB from Limosilactobacillus reuteri subsp. suis (strain ATCC 53608 / LMG 31752 / 1063) (Lactobacillus reuteri).